A 1868-amino-acid chain; its full sequence is Dedicator of cytokinesis protein 5 (1868 aa).

The 62-residue stretch at 8–69 (KRQKYGVAIY…PETYIHLKEA (62 aa)) folds into the SH3 domain. Ser365 carries the post-translational modification Phosphoserine. The region spanning 443–627 (RNDIYVTLIH…DSFQIATLIC (185 aa)) is the C2 DOCK-type domain. Lys818 carries the N6-acetyllysine modification. A DOCKER domain is found at 1231–1642 (YKDKKREDIY…VEKLYGVITL (412 aa)). Residues 1681–1692 (STSSNSSDNASS) are compositionally biased toward low complexity. Disordered stretches follow at residues 1681 to 1730 (STSS…RISK) and 1742 to 1868 (QVIA…PGSQ). Basic and acidic residues predominate over residues 1704-1728 (LFERRASSGARVEDLPPKEDSENRI). Phosphoserine occurs at positions 1755, 1765, 1771, 1784, and 1788. Thr1793 is modified (phosphothreonine). The span at 1796-1810 (ATRTLSSPSLQTDGL) shows a compositional bias: polar residues. Phosphoserine is present on residues Ser1832 and Ser1867.

It belongs to the DOCK family. As to quaternary structure, interacts with CRK and CRKL. Interacts (via N-terminus) with tensin TNS3 (via N-terminus); the interaction increases DOCK5 guanine nucleotide exchange activity towards Rac. Interacts with ELMO1. In terms of tissue distribution, highly expressed in lens, where it predominantly localizes to anterior epithelial cells, and is weakly expressed in lens fiber (at protein level). Expressed in brain, eye, lung, spleen and kidney, but not in thymus or peripheral blood leukocytes.

It localises to the cytoplasm. The protein resides in the cell membrane. It is found in the cell projection. Its subcellular location is the podosome. Functionally, guanine nucleotide exchange factor (GEF) for Rho and Rac. GEF proteins activate small GTPases by exchanging bound GDP for free GTP. Along with DOCK1, mediates CRK/CRKL regulation of epithelial and endothelial cell spreading and migration on type IV collagen. The protein is Dedicator of cytokinesis protein 5 of Mus musculus (Mouse).